The sequence spans 403 residues: PP2A regulatory subunit TAP46 (403 aa).

2 disordered regions span residues 158–184 (ERRGRSTKAAALSSPVETEEDDVLDDD) and 351–403 (ANSS…TPCG). Acidic residues-rich tracts occupy residues 174-184 (ETEEDDVLDDD) and 366-375 (EDDEEDDDDA). Residues 376–391 (AQDKARAWDDWKDDNP) are compositionally biased toward basic and acidic residues.

It belongs to the IGBP1/TAP42 family.

Its function is as follows. Involved in the regulation of the TOR signaling pathway. Seems to act as a regulator of PP2A catalytic activity. The polypeptide is PP2A regulatory subunit TAP46 (Nicotiana tabacum (Common tobacco)).